Here is a 54-residue protein sequence, read N- to C-terminus: Beta-2-microglobulin (54 aa).

Residues 3–41 (KVELSDLSFNKDWSFYLLAHREFVPTATDKYACRVSHIT) enclose the Ig-like C1-type domain.

This sequence belongs to the beta-2-microglobulin family. Heterodimer of an alpha chain and a beta chain. Beta-2-microglobulin is the beta-chain of major histocompatibility complex class I molecules.

Its subcellular location is the secreted. In terms of biological role, component of the class I major histocompatibility complex (MHC). Involved in the presentation of peptide antigens to the immune system. This Mesocricetus auratus (Golden hamster) protein is Beta-2-microglobulin (B2M).